A 546-amino-acid polypeptide reads, in one-letter code: Type II methyltransferase M.XhoI (546 aa).

The protein belongs to the N(4)/N(6)-methyltransferase family.

The enzyme catalyses a 2'-deoxyadenosine in DNA + S-adenosyl-L-methionine = an N(6)-methyl-2'-deoxyadenosine in DNA + S-adenosyl-L-homocysteine + H(+). Functionally, a gamma subtype methylase, recognizes the double-stranded sequence 5'-CTCGAG-3', methylates A-5 on both strands, and protects the DNA from cleavage by the XhoI endonuclease. The polypeptide is Type II methyltransferase M.XhoI (Xanthomonas vasicola).